Here is a 381-residue protein sequence, read N- to C-terminus: NF-kappa-B inhibitor-like protein 1 (381 aa).

A disordered region spans residues 1-34 (MSNPSPQVPEEEASTSVCRPKSSMASTSRRQRRE). 2 ANK repeats span residues 64 to 93 (GQPPPLHRACARHDAPALCLLLRLGADPAH) and 97 to 130 (HGDTALHAAARQGPDAYTDFFLPLLSRCPSAMGI). Disordered regions lie at residues 129 to 167 (GIKNKDGETPGQILGWGPPWDSAEEEEEDDASKEREWRQ) and 186 to 294 (GDAS…RGSL). The residue at position 150 (Ser150) is a Phosphoserine. Residues 150 to 159 (SAEEEEEDDA) show a composition bias toward acidic residues. Basic and acidic residues-rich tracts occupy residues 218-228 (REAEGSRRPPR) and 238-287 (QQEE…EHPR).

Interacts with CACTIN (via N-terminal domain); the interaction occurs in a proinflammatory-independent manner. As to expression, detected in different cell types including monocytes, T-cells, B-cells and hepatocytes.

The protein resides in the nucleus. Involved in the regulation of innate immune response. Acts as negative regulator of Toll-like receptor and interferon-regulatory factor (IRF) signaling pathways. Contributes to the negative regulation of transcriptional activation of NF-kappa-B target genes in response to endogenous proinflammatory stimuli. The sequence is that of NF-kappa-B inhibitor-like protein 1 (NFKBIL1) from Homo sapiens (Human).